Consider the following 151-residue polypeptide: Ribosome maturation factor RimP (151 aa).

Belongs to the RimP family.

It localises to the cytoplasm. Functionally, required for maturation of 30S ribosomal subunits. In Shewanella oneidensis (strain ATCC 700550 / JCM 31522 / CIP 106686 / LMG 19005 / NCIMB 14063 / MR-1), this protein is Ribosome maturation factor RimP.